The chain runs to 86 residues: UPF0457 protein SSP0714 (86 aa).

This sequence belongs to the UPF0457 family.

This Staphylococcus saprophyticus subsp. saprophyticus (strain ATCC 15305 / DSM 20229 / NCIMB 8711 / NCTC 7292 / S-41) protein is UPF0457 protein SSP0714.